A 106-amino-acid chain; its full sequence is Small ribosomal subunit protein bS18 (106 aa).

The disordered stretch occupies residues 1–39; it reads MNGRNNDMGRNGGADYDDRDFGRTPDLNADAPGRRRTGR.

It belongs to the bacterial ribosomal protein bS18 family. Part of the 30S ribosomal subunit. Forms a tight heterodimer with protein bS6.

Binds as a heterodimer with protein bS6 to the central domain of the 16S rRNA, where it helps stabilize the platform of the 30S subunit. The polypeptide is Small ribosomal subunit protein bS18 (Sorangium cellulosum (strain So ce56) (Polyangium cellulosum (strain So ce56))).